Here is a 320-residue protein sequence, read N- to C-terminus: Putative S-adenosyl-L-methionine-dependent methyltransferase MAP_4078 (320 aa).

Residues Asp132 and 161 to 162 (DL) contribute to the S-adenosyl-L-methionine site. The disordered stretch occupies residues 294–320 (PPHDIEDAIPQTRFVAAQRTERTRPDR).

It belongs to the UPF0677 family.

Its function is as follows. Exhibits S-adenosyl-L-methionine-dependent methyltransferase activity. This Mycolicibacterium paratuberculosis (strain ATCC BAA-968 / K-10) (Mycobacterium paratuberculosis) protein is Putative S-adenosyl-L-methionine-dependent methyltransferase MAP_4078.